A 313-amino-acid chain; its full sequence is Pre-mRNA-splicing factor 38A (313 aa).

The tract at residues 1-179 (MANRTVKDAN…VLEEAELLDP (179 aa)) is N-terminal protein interaction domain. Positions 172-201 (EEAELLDPRISALEEDLDEVETSEEEDDED) form a coiled coil. The segment at 182–313 (SALEEDLDEV…SHKRSRRGNE (132 aa)) is disordered. Acidic residues predominate over residues 184 to 202 (LEEDLDEVETSEEEDDEDE). Basic and acidic residues predominate over residues 203 to 224 (KPERMQSPEPHRRSYRDMDRPR). Composition is skewed to basic residues over residues 225–250 (RSPS…RSPS), 260–294 (HRSK…RSHS), and 302–313 (KKSHKRSRRGNE).

This sequence belongs to the PRP38 family. Component of the spliceosome B complex.

The protein resides in the nucleus. In terms of biological role, involved in pre-mRNA splicing as a component of the spliceosome. This Danio rerio (Zebrafish) protein is Pre-mRNA-splicing factor 38A (prpf38a).